The sequence spans 280 residues: Cis-2,3-dihydrobiphenyl-2,3-diol dehydrogenase (280 aa).

Position 9 to 33 (9 to 33 (LVTGGCAGLGRAIVDRFVCEGARVA)) interacts with NAD(+). S142 is a substrate binding site. Catalysis depends on Y155, which acts as the Proton acceptor.

Belongs to the short-chain dehydrogenases/reductases (SDR) family.

It catalyses the reaction (2R,3S)-3-phenylcyclohexa-3,5-diene-1,2-diol + NAD(+) = biphenyl-2,3-diol + NADH + H(+). The protein operates within xenobiotic degradation; biphenyl degradation; 2-hydroxy-2,4-pentadienoate and benzoate from biphenyl: step 2/4. This is Cis-2,3-dihydrobiphenyl-2,3-diol dehydrogenase (bphB) from Rhodococcus globerulus.